Consider the following 140-residue polypeptide: Small ribosomal subunit protein uS12 (140 aa).

Residues 1 to 28 (MPTINQLVRKSRKALEKKSTAPALQKGY) form a disordered region. 3-methylthioaspartic acid is present on Asp-102. The segment at 119–140 (GVDKRRQSRSKYGAKRPKEAKK) is disordered. A compositionally biased stretch (basic residues) spans 124–140 (RQSRSKYGAKRPKEAKK).

Belongs to the universal ribosomal protein uS12 family. Part of the 30S ribosomal subunit. Contacts proteins S8 and S17. May interact with IF1 in the 30S initiation complex.

Its function is as follows. With S4 and S5 plays an important role in translational accuracy. Interacts with and stabilizes bases of the 16S rRNA that are involved in tRNA selection in the A site and with the mRNA backbone. Located at the interface of the 30S and 50S subunits, it traverses the body of the 30S subunit contacting proteins on the other side and probably holding the rRNA structure together. The combined cluster of proteins S8, S12 and S17 appears to hold together the shoulder and platform of the 30S subunit. This is Small ribosomal subunit protein uS12 from Clostridioides difficile (strain 630) (Peptoclostridium difficile).